The following is a 244-amino-acid chain: Cysteine-rich secretory protein 1 (244 aa).

The first 19 residues, 1–19 (MALMLVLFFLAAVLPPSLL), serve as a signal peptide directing secretion. Residues 44–170 (SKHNQLRRMV…PLRYYYVCHY (127 aa)) form the SCP domain. Residue N145 is glycosylated (N-linked (GlcNAc...) asparagine). Disulfide bonds link C190–C197, C193–C202, C206–C239, C215–C233, and C224–C237. One can recognise a ShKT domain in the interval 206-239 (CGHEDKYTNCKYLKKMLSCEHELLKKGCKATCLC).

The protein belongs to the CRISP family. Mainly found in the cauda epididymis where it is synthesized by the principal cells and secreted into the lumen. Binds to the heads of spermatozoa. Also expressed in the submandibular gland.

The protein resides in the cytoplasmic vesicle. It localises to the secretory vesicle. In terms of biological role, this protein is supposed to help spermatozoa undergo functional maturation while they move from the testis to the ductus deferens. The protein is Cysteine-rich secretory protein 1 (Crisp1) of Mus musculus (Mouse).